Here is a 150-residue protein sequence, read N- to C-terminus: Large ribosomal subunit protein bL9 (150 aa).

The protein belongs to the bacterial ribosomal protein bL9 family.

Functionally, binds to the 23S rRNA. In Shewanella putrefaciens (strain CN-32 / ATCC BAA-453), this protein is Large ribosomal subunit protein bL9.